We begin with the raw amino-acid sequence, 257 residues long: Transmembrane protein 101 (257 aa).

8 helical membrane-spanning segments follow: residues 21–40 (VLLT…LYAE), 52–72 (VPYL…MSFG), 77–97 (WFAL…YVGG), 110–130 (YSRT…AGEL), 139–159 (SLQS…AYSL), 182–202 (LFFV…YVTL), 206–226 (ILAV…AYWH), and 233–253 (FWNQ…AVIL).

It localises to the membrane. Functionally, may activate NF-kappa-B signaling pathways. This is Transmembrane protein 101 (TMEM101) from Bos taurus (Bovine).